We begin with the raw amino-acid sequence, 485 residues long: MNYEAVIGLEVHVQVKTASKMFTRVAAGYGHAPNTLTDPVVLALPGTLPVMNKAALDAIIKAGLLLGCEIAPVCKWDRKNYFYPDSPKNYQISQYDQPICLGGAVEIELPGSARNVMGEHKKIPLTRIHLEEDVGKLNHESVDSLVDYNRAGTPLMEIVSEPAIHSAEEAFAYLTSLRATMIYGGISDCDMEKGQLRCDANISVRPVGETKLGTKVELKNLNSISFVRDGIAHEIKRQLAVIERGGTIVQETRDYDGQTGTSQSLRSKEMAHDYRYFPDPDLMPVVVDQAWKARIQTTCPELPFDKQRRFFEQYRLPYTLTSVLVWDRELSDYFEETVKIAGADKAQTVGNWIVNDLLREIGTARVPLADAKVRPAHIAELVKLIDAGTILTNAAKEIFVEMFATGDTPAIIADRRGLKAAPTDSNELEQWCRDAIAANAKAVAEFKAGKDSAINAFKGPVMKAAKGKANPKLVDETLRRLLAAL.

It belongs to the GatB/GatE family. GatB subfamily. As to quaternary structure, heterotrimer of A, B and C subunits.

The catalysed reaction is L-glutamyl-tRNA(Gln) + L-glutamine + ATP + H2O = L-glutaminyl-tRNA(Gln) + L-glutamate + ADP + phosphate + H(+). It catalyses the reaction L-aspartyl-tRNA(Asn) + L-glutamine + ATP + H2O = L-asparaginyl-tRNA(Asn) + L-glutamate + ADP + phosphate + 2 H(+). Functionally, allows the formation of correctly charged Asn-tRNA(Asn) or Gln-tRNA(Gln) through the transamidation of misacylated Asp-tRNA(Asn) or Glu-tRNA(Gln) in organisms which lack either or both of asparaginyl-tRNA or glutaminyl-tRNA synthetases. The reaction takes place in the presence of glutamine and ATP through an activated phospho-Asp-tRNA(Asn) or phospho-Glu-tRNA(Gln). This Opitutus terrae (strain DSM 11246 / JCM 15787 / PB90-1) protein is Aspartyl/glutamyl-tRNA(Asn/Gln) amidotransferase subunit B.